A 584-amino-acid polypeptide reads, in one-letter code: Pentalenolactone D synthase (584 aa).

Residues 55-56 (IG), 77-78 (DG), 85-86 (TW), 97-98 (DV), Y103, V147, and M486 contribute to the FAD site.

It belongs to the FAD-binding monooxygenase family. FAD is required as a cofactor.

It catalyses the reaction 1-deoxy-11-oxopentalenate + NADPH + O2 + H(+) = pentalenolactone D + NADP(+) + H2O. Its pathway is antibiotic biosynthesis; pentalenolactone biosynthesis. Catalyzes the flavin-dependent Baeyer-Villiger oxidation of 1-deoxy-11-oxopentalenic acid to pentalenolactone D in the biosynthesis of pentalenolactone antibiotic. The polypeptide is Pentalenolactone D synthase (penE) (Streptomyces exfoliatus (Streptomyces hydrogenans)).